The following is a 136-amino-acid chain: UPF0216 protein PYRAB16100 (136 aa).

It belongs to the UPF0216 family.

In Pyrococcus abyssi (strain GE5 / Orsay), this protein is UPF0216 protein PYRAB16100.